Reading from the N-terminus, the 442-residue chain is Putative amino acid transporter YuiF (442 aa).

A run of 11 helical transmembrane segments spans residues 21-41 (IVIALIIGALAGGLTGGLGLG), 51-71 (LGGNATVAVSYAMLGAFAAAL), 103-123 (LIVLIILIVSCFSQNVVPVHI), 146-166 (LIACVITFGLTAPYILLPVGF), 190-210 (IPYALIIPVAGMVVGLILSVI), 236-256 (IGIAVLAIVVSLGVQLYLSQT), 259-279 (VEGMIMGALAGLIVLFVSGVM), 292-312 (MVLMAFIGFVMLVAAGFSNVL), 335-355 (LGALLMLIVGLLITMGIGSSF), 364-384 (IFVPLCMQLGFSPMATIAIIG), and 421-441 (VPTFIFYNIPLVIFGWIAALV).

It localises to the cell membrane. This is Putative amino acid transporter YuiF (yuiF) from Bacillus subtilis (strain 168).